The following is a 716-amino-acid chain: Mitochondrial Rho GTPase 1 (716 aa).

Residues 1–692 (MSPDAIRVVV…VSVDQDDIKH (692 aa)) are Cytoplasmic-facing. Residues 3–224 (PDAIRVVVCG…FYLCQRAVTH (222 aa)) enclose the Miro 1 domain. The segment at 58 to 99 (NDQDHHHHHQSSPSTMKNKRKHNNKRERERERESSINNVQPN) is disordered. GTP contacts are provided by residues 84–91 (ERERERES), 113–115 (DTS), and 167–170 (NKSD). In terms of domain architecture, EF-hand 1 spans 240-275 (GAIKPLKRIFWLSDTDQDGYLNFEELSELHKKCFGI). Ca(2+) is bound by residues D253, D255, D257, Y259, and E264. The tract at residues 303-327 (TQTPPQQQHLATSAGTPNGTTTTTS) is disordered. The EF-hand 2 domain occupies 388-423 (TGYKFFVDLFIKFDKDNDGGLNEDELNTLFRSTPGI). Residues D401, D403, D405, and E412 each coordinate Ca(2+). Residues 505–671 (RNVFNCFIVG…FIQLVDAAKT (167 aa)) form the Miro 2 domain. GTP is bound by residues 514–521 (GAPKAGKS), 550–554 (ELRGG), and 620–623 (LKAD). Residues 693–713 (IIMTGAAIAVVGLVSIWVLNS) form a helical; Anchor for type IV membrane protein membrane-spanning segment. At 714 to 716 (LRR) the chain is on the mitochondrial intermembrane side.

It belongs to the mitochondrial Rho GTPase family.

Its subcellular location is the mitochondrion outer membrane. In terms of biological role, mitochondrial GTPase involved in mitochondrial trafficking. Probably involved in control of anterograde transport of mitochondria and their subcellular distribution. The polypeptide is Mitochondrial Rho GTPase 1 (GEM1) (Candida albicans (strain SC5314 / ATCC MYA-2876) (Yeast)).